Here is a 597-residue protein sequence, read N- to C-terminus: Intrastrand cross-link recognition protein (597 aa).

Residues 1–28 show a composition bias toward polar residues; the sequence is MNTGISPKQDDASNSNLLNIGQDHSLQY. Disordered regions lie at residues 1-134, 174-212, 259-291, and 327-364; these read MNTG…NVNA, QTNP…LAAS, SAGN…QQQM, and HLQQ…PKRP. Residues 32–42 are compositionally biased toward basic and acidic residues; the sequence is EHNDSQYRDAS. Composition is skewed to low complexity over residues 52–134, 178–212, 260–271, 281–291, and 327–337; these read QFQA…NVNA, SVTG…LAAS, AGNAAGNANTAT, QPQLTHHQQQM, and HLQQQQQQQQH. Residues 351-361 are compositionally biased toward basic residues; the sequence is ERRKQLKKQGP. 2 DNA-binding regions (HMG box) span residues 361–429 and 434–502; these read PKRP…DAYE and PKRP…PDEN. The residue at position 532 (S532) is a Phosphoserine. Composition is skewed to low complexity over residues 543-556 and 564-580; these read SVTG…NPNT and LQQQ…QQQQ. Residues 543 to 597 are disordered; that stretch reads SVTGSNSNSTNPNTPVSPPISLQQQPLQQQQQQQQQQQHMLLADPTTNGSIIKNE. The segment covering 587–597 has biased composition (polar residues); it reads PTTNGSIIKNE.

The protein localises to the nucleus. In terms of biological role, binds to platinated DNA and confers sensitivity to the anticancer drug cisplatin. Activate the expression of the COX5B gene. This chain is Intrastrand cross-link recognition protein (IXR1), found in Saccharomyces cerevisiae (strain ATCC 204508 / S288c) (Baker's yeast).